A 143-amino-acid chain; its full sequence is Transcriptional regulator MraZ (143 aa).

2 SpoVT-AbrB domains span residues 5–47 and 76–119; these read EYRH…TQEE and ATEC…SEDR.

It belongs to the MraZ family. In terms of assembly, forms oligomers.

Its subcellular location is the cytoplasm. The protein localises to the nucleoid. The sequence is that of Transcriptional regulator MraZ from Ligilactobacillus salivarius (strain UCC118) (Lactobacillus salivarius).